A 597-amino-acid polypeptide reads, in one-letter code: Bromodomain-containing protein 9 (597 aa).

Residues 1 to 10 are compositionally biased toward basic residues; the sequence is MGKKHKKHKA. Disordered regions lie at residues 1–25 and 38–138; these read MGKKHKKHKAEWRSSYEDYADKPLE and EVTE…ENES. Basic and acidic residues-rich tracts occupy residues 11–25 and 50–62; these read EWRSSYEDYADKPLE and SYYDDRSDHERER. Phosphoserine is present on S56. The segment covering 63 to 73 has biased composition (basic residues); sequence HKEKKKKKKKK. The span at 74-85 shows a compositional bias: basic and acidic residues; it reads SEKEKHLDDEER. The span at 86–97 shows a compositional bias: basic residues; the sequence is RKRKEEKKRKRE. The segment covering 111–126 has biased composition (basic and acidic residues); that stretch reads DPGKKVEVEPPPDRPV. The Bromo domain occupies 136–240; that stretch reads NESTPIQQLL…HAGFKMMSKQ (105 aa). The tract at residues 214 to 216 is histone H4K5ac H4K8ac and histone H4K5bu H4K8bu binding; sequence TYN. Residue K373 is modified to N6-acetyllysine; alternate. Residue K373 forms a Glycyl lysine isopeptide (Lys-Gly) (interchain with G-Cter in SUMO2); alternate linkage. The disordered stretch occupies residues 536–597; that stretch reads EAQAERGGSR…SPEPAASAKT (62 aa). The segment covering 544-556 has biased composition (low complexity); that stretch reads SRPSSNLSSLSNA. Phosphoserine occurs at positions 566 and 588.

Binds acetylated histones H3 and H4. Binds butyrylated histone H4. Component of the multiprotein chromatin-remodeling subcomplex SWI/SNF called GBAF, which includes at least BICRA or BICRAL (mutually exclusive), BRD9, SS18, the core BAF subunits, SMARCA2/BRM, SMARCA4/BRG1/BAF190A, ACTL6A/BAF53, SMARCC1/BAF155, and SMARCD1/BAF60A. Interacts (via N-terminal bromodomain) with acetylated RAD54. Interacts (via C-terminus) with RAD51.

It localises to the nucleus. Its function is as follows. Plays a role in chromatin remodeling and regulation of transcription. Acts as a chromatin reader that recognizes and binds acylated histones: binds histones that are acetylated and/or butyrylated. Component of SWI/SNF chromatin remodeling subcomplex GBAF that carries out key enzymatic activities, changing chromatin structure by altering DNA-histone contacts within a nucleosome in an ATP-dependent manner. Also orchestrates the RAD51-RAD54 complex formation and thereby plays a role in homologous recombination (HR). This chain is Bromodomain-containing protein 9 (BRD9), found in Homo sapiens (Human).